We begin with the raw amino-acid sequence, 547 residues long: Probable hydroxyacid-oxoacid transhydrogenase, mitochondrial (547 aa).

It belongs to the iron-containing alcohol dehydrogenase family. Hydroxyacid-oxoacid transhydrogenase subfamily.

It is found in the mitochondrion. It catalyses the reaction (S)-3-hydroxybutanoate + 2-oxoglutarate = (R)-2-hydroxyglutarate + acetoacetate. The catalysed reaction is 4-hydroxybutanoate + 2-oxoglutarate = (R)-2-hydroxyglutarate + succinate semialdehyde. In terms of biological role, catalyzes the cofactor-independent reversible oxidation of gamma-hydroxybutyrate (GHB) to succinic semialdehyde (SSA) coupled to reduction of 2-ketoglutarate (2-KG) to D-2-hydroxyglutarate (D-2-HG). L-3-hydroxybutyrate (L-3-OHB) is also a substrate for HOT when using 2-KG as hydrogen acceptor, resulting in the formation of D-2-HG. In Dictyostelium discoideum (Social amoeba), this protein is Probable hydroxyacid-oxoacid transhydrogenase, mitochondrial (adhfe1).